A 177-amino-acid polypeptide reads, in one-letter code: MNTKITNFTFAFDKKNLNLAETIIKKYPPEGKRSAILPLLDLAQRQNGGWLHVSAIEYVANMLEMPYMRAYEVATFYTMFNLNPIGKYHIQVCTTTPCWLRGSDNIMKICEKKLAIKHKETTKDQKFTLSEIECLGACVNAPVVQINDDYYEDLNEAKMEKLIEQYLNEFKSKMQNG.

Cysteine 93, cysteine 98, cysteine 134, and cysteine 138 together coordinate [2Fe-2S] cluster.

The protein belongs to the complex I 24 kDa subunit family. [2Fe-2S] cluster is required as a cofactor.

It catalyses the reaction a quinone + NADH + 5 H(+)(in) = a quinol + NAD(+) + 4 H(+)(out). In terms of biological role, NDH-1 shuttles electrons from NADH, via FMN and iron-sulfur (Fe-S) centers, to quinones in the respiratory chain. Couples the redox reaction to proton translocation (for every two electrons transferred, four hydrogen ions are translocated across the cytoplasmic membrane), and thus conserves the redox energy in a proton gradient. This Rickettsia prowazekii (strain Madrid E) protein is NADH-quinone oxidoreductase subunit E (nuoE).